We begin with the raw amino-acid sequence, 344 residues long: Ion-translocating oxidoreductase complex subunit D (344 aa).

4 consecutive transmembrane segments (helical) span residues 23 to 43 (LVLG…GAGT), 44 to 64 (LLNL…MLAL), 80 to 100 (VTAL…LTLV), and 120 to 140 (PFNP…LEMT). The residue at position 172 (Thr-172) is an FMN phosphoryl threonine. Helical transmembrane passes span 198–218 (LGGA…LFLL), 222–242 (LFTW…SLLF), 252–272 (GSPL…FIVT), 285–305 (LLFG…GGYP), and 306–326 (DGVA…DYYT).

This sequence belongs to the NqrB/RnfD family. The complex is composed of six subunits: RnfA, RnfB, RnfC, RnfD, RnfE and RnfG. It depends on FMN as a cofactor.

The protein resides in the cell inner membrane. Functionally, part of a membrane-bound complex that couples electron transfer with translocation of ions across the membrane. This chain is Ion-translocating oxidoreductase complex subunit D, found in Pseudomonas paraeruginosa (strain DSM 24068 / PA7) (Pseudomonas aeruginosa (strain PA7)).